The primary structure comprises 377 residues: Chaperone protein DnaJ (377 aa).

Residues 4–69 form the J domain; it reads DYYEALGVTR…QKRAAYDRFG (66 aa). The CR-type zinc-finger motif lies at 135–213; sequence GKTAQIRVPT…CHGQGRVTQE (79 aa). The Zn(2+) site is built by Cys-148, Cys-151, Cys-165, Cys-168, Cys-187, Cys-190, Cys-201, and Cys-204. CXXCXGXG motif repeat units lie at residues 148–155, 165–172, 187–194, and 201–208; these read CDECSGSG, CTMCSGSG, CPGCNGRG, and CEKCHGQG.

It belongs to the DnaJ family. As to quaternary structure, homodimer. The cofactor is Zn(2+).

The protein localises to the cytoplasm. Its function is as follows. Participates actively in the response to hyperosmotic and heat shock by preventing the aggregation of stress-denatured proteins and by disaggregating proteins, also in an autonomous, DnaK-independent fashion. Unfolded proteins bind initially to DnaJ; upon interaction with the DnaJ-bound protein, DnaK hydrolyzes its bound ATP, resulting in the formation of a stable complex. GrpE releases ADP from DnaK; ATP binding to DnaK triggers the release of the substrate protein, thus completing the reaction cycle. Several rounds of ATP-dependent interactions between DnaJ, DnaK and GrpE are required for fully efficient folding. Also involved, together with DnaK and GrpE, in the DNA replication of plasmids through activation of initiation proteins. This chain is Chaperone protein DnaJ, found in Brucella abortus (strain S19).